Here is a 698-residue protein sequence, read N- to C-terminus: Transcription factor cwo (698 aa).

Positions 62–75 (QDPLSHRIIEKRRR) are basic motif; degenerate. Residues 62-117 (QDPLSHRIIEKRRRDRMNSCLADLSRLIPPQYQRKGRGRIEKTEIIEMAIRHLKHL) enclose the bHLH domain. A helix-loop-helix motif region spans residues 76-117 (DRMNSCLADLSRLIPPQYQRKGRGRIEKTEIIEMAIRHLKHL). An Orange domain is found at 128–159 (YRSGYMDCMKEAAKFLYDVHMQDFCHRLLGRL). 2 disordered regions span residues 257 to 319 (SSPA…ASST) and 349 to 369 (STAPHHHHHHTDSSHHDFESS). Low complexity predominate over residues 280 to 318 (APPAADNVPSNSTGSGSAAACAGGNSNSSGSNSSNAASS). Residues 359-369 (TDSSHHDFESS) are compositionally biased toward basic and acidic residues.

Expressed in adult brain where it is detected in the dorsal lateral neurons, small and large ventral lateral neurons and dorsal neurons 1, 2 and 3 (at protein level). Expressed at constant levels in a 12 hour light / 12 hour day cycle (at protein level). Strongly expressed in pacemaker neurons. In adults, mRNA expression oscillates in a circadian manner with a peak at around 14 hour Zeitgeber time. mRNA levels oscillate in a rhythmic manner in both 12 hour light / 12 hour dark and constant dark conditions with a morning peak around the time of lights-on and an evening peak around the time of lights-off in light/dark conditions. During stage 8 of embryonic development, expressed in the anterior and posterior midgut primordia and expression in the gut continues throughout embryonic development. During germ band retraction, expression is initiated in many tissues in a prominent segmentally repeated pattern. Later, expression is ubiquitous but has higher levels in segmentally repeated clusters of cells. Expression is also found in cells of the amnioserosa, in the head region, in posterior spiracles and in tracheal trees.

Its subcellular location is the nucleus. In terms of biological role, plays a role in the regulation of circadian rhythms. Transcriptional repressor which inhibits Clock-mediated transcriptional activation by binding to E boxes in the promoters of Clock target genes and repressing their transcription. E box binding activity is time-dependent with higher binding activity seen in the early morning (zeitgeber time 2) than early evening (zeitgeber time 14) and is dependent on the presence of the circadian protein per. It is likely that per binds to Clock-cycle heterodimers, reducing their affinity for E box binding and allowing cwo to bind instead. Negatively regulates its own expression. This chain is Transcription factor cwo, found in Drosophila melanogaster (Fruit fly).